A 501-amino-acid polypeptide reads, in one-letter code: Putative zinc metalloprotease TM_0890 (501 aa).

His-17 serves as a coordination point for Zn(2+). Glu-18 is an active-site residue. His-21 lines the Zn(2+) pocket. 4 consecutive transmembrane segments (helical) span residues 93-115 (FLIT…LPIT), 401-420 (VQTG…SAAS), 427-449 (VLTV…LPAL), and 474-496 (IIHF…LDIG). Residues 96-180 (TLAGPLFSIL…LVIIRNGEKK (85 aa)) enclose the PDZ domain.

This sequence belongs to the peptidase M50B family. Requires Zn(2+) as cofactor.

The protein resides in the cell inner membrane. The chain is Putative zinc metalloprotease TM_0890 from Thermotoga maritima (strain ATCC 43589 / DSM 3109 / JCM 10099 / NBRC 100826 / MSB8).